Consider the following 296-residue polypeptide: uncharacterized protein (296 aa).

Residues 1 to 20 (MKKLLLIIITVFFAFNVAQA) form the signal peptide.

This is an uncharacterized protein from Rickettsia felis (strain ATCC VR-1525 / URRWXCal2) (Rickettsia azadi).